Consider the following 485-residue polypeptide: NADH-quinone oxidoreductase subunit N (485 aa).

The next 14 membrane-spanning stretches (helical) occupy residues 8 to 28 (LIAL…MLSI), 35 to 55 (FLNA…LWFV), 71 to 91 (GFAM…CTFA), 105 to 125 (FYLL…ANHL), 127 to 147 (SLFL…GYAF), 159 to 179 (YTIL…LVYA), 203 to 223 (LLAG…LVPF), 235 to 255 (PAPV…GVVM), 271 to 291 (VVLA…ALSQ), 297 to 317 (LLGY…IALQ), 326 to 346 (VGVY…VVSL), 373 to 393 (AAVM…LGFI), 408 to 430 (WWLV…RVAV), and 455 to 475 (IVVL…QPLI).

Belongs to the complex I subunit 2 family. NDH-1 is composed of 13 different subunits. Subunits NuoA, H, J, K, L, M, N constitute the membrane sector of the complex.

It localises to the cell inner membrane. It catalyses the reaction a quinone + NADH + 5 H(+)(in) = a quinol + NAD(+) + 4 H(+)(out). In terms of biological role, NDH-1 shuttles electrons from NADH, via FMN and iron-sulfur (Fe-S) centers, to quinones in the respiratory chain. The immediate electron acceptor for the enzyme in this species is believed to be ubiquinone. Couples the redox reaction to proton translocation (for every two electrons transferred, four hydrogen ions are translocated across the cytoplasmic membrane), and thus conserves the redox energy in a proton gradient. The polypeptide is NADH-quinone oxidoreductase subunit N (Shigella flexneri).